A 681-amino-acid polypeptide reads, in one-letter code: GAS2-like protein 1 (681 aa).

Residue alanine 2 is modified to N-acetylalanine. Residues 27 to 148 (EAMKEDLAEW…CLLEVARRGA (122 aa)) form the Calponin-homology (CH) domain. Disordered stretches follow at residues 168–204 (LRAA…TPSD), 278–509 (STAH…PLQL), and 536–681 (ASVT…DSWM). A compositionally biased stretch (low complexity) spans 186–199 (ETAPAPGTPARGPR). At threonine 193 the chain carries Phosphothreonine. The 73-residue stretch at 203 to 275 (SDLRNLDELV…HYLDKHDPCR (73 aa)) folds into the GAR domain. A compositionally biased stretch (polar residues) spans 291 to 303 (FSPQRVSPTTSPR). Serine 306 and serine 316 each carry phosphoserine. Basic and acidic residues predominate over residues 327–342 (STKEGPETPPRPRDQL). Threonine 334 is subject to Phosphothreonine. 2 positions are modified to phosphoserine: serine 352 and serine 355. Residues 354 to 365 (DSDSSASSAQSG) show a composition bias toward low complexity. Basic and acidic residues predominate over residues 370 to 381 (RSDDTGTGPRRE). The residue at position 391 (threonine 391) is a Phosphothreonine. Residue serine 394 is modified to Phosphoserine. A compositionally biased stretch (basic and acidic residues) spans 404–413 (QSRDRLDRGR). Serine 436, serine 438, serine 479, and serine 486 each carry phosphoserine. The segment covering 437-454 (QSREEQAVLLVRRDRDGQ) has biased composition (basic and acidic residues). Residues 475 to 493 (PRARSPAAPRLSRVSSPSP) are compositionally biased toward low complexity. The residue at position 487 (arginine 487) is an Omega-N-methylarginine. 2 positions are modified to phosphoserine: serine 490 and serine 492. Threonine 498 is subject to Phosphothreonine. Arginine 504 is modified (omega-N-methylarginine). A compositionally biased stretch (pro residues) spans 542–556 (GPVPDPARAPDPPAP). The span at 557-571 (DSAYCSSSSSSSSLS) shows a compositional bias: low complexity. At arginine 633 the chain carries Omega-N-methylarginine. Residues 634 to 644 (GRMDTQPDRKP) are compositionally biased toward basic and acidic residues. Serine 657 carries the phosphoserine modification.

This sequence belongs to the GAS2 family. In terms of assembly, interacts with MAPRE1.

It is found in the cytoplasm. The protein localises to the cytoskeleton. The protein resides in the stress fiber. Its function is as follows. Involved in the cross-linking of microtubules and microfilaments. Regulates microtubule dynamics and stability by interacting with microtubule plus-end tracking proteins, such as MAPRE1, to regulate microtubule growth along actin stress fibers. The sequence is that of GAS2-like protein 1 (GAS2L1) from Homo sapiens (Human).